We begin with the raw amino-acid sequence, 309 residues long: MKITVIGAGHVGATAALRIAEKQLAREVVLIDIIEGIPQGKALDMYESGPVALFDTMVKGSNDYADSADSDIVLITAGLARKPGMSREDLLMKNTAIIKDVTTQVMRYSVNPILIMVSNPLDVMTFVAHTVSGLKPERVIGMAGVLDTARFRSFIAEALNVSMQDINAFVLGGHGDSMVPVVKYTNVAGIPLTELLPKETIDAIVERTKNGGIEIVNHLKTGSAFYAPAASAVEMIESIVKDRKRILPCTTCLGGQYGINNVFCGVPVKLGKEGVEQILEINLDDNELKALQASAAIVEKNCKSLASAI.

Residues 7 to 12 and aspartate 32 each bind NAD(+); that span reads GAGHVG. Positions 81 and 87 each coordinate substrate. Residues asparagine 94 and 117-119 each bind NAD(+); that span reads VSN. The substrate site is built by asparagine 119 and arginine 150. The Proton acceptor role is filled by histidine 174.

It belongs to the LDH/MDH superfamily. MDH type 3 family.

It carries out the reaction (S)-malate + NAD(+) = oxaloacetate + NADH + H(+). Functionally, catalyzes the reversible oxidation of malate to oxaloacetate. In Chlorobium phaeovibrioides (strain DSM 265 / 1930) (Prosthecochloris vibrioformis (strain DSM 265)), this protein is Malate dehydrogenase.